The chain runs to 300 residues: Recombination-associated protein RdgC (300 aa).

This sequence belongs to the RdgC family.

The protein localises to the cytoplasm. The protein resides in the nucleoid. Its function is as follows. May be involved in recombination. In Janthinobacterium sp. (strain Marseille) (Minibacterium massiliensis), this protein is Recombination-associated protein RdgC.